The sequence spans 299 residues: Ribosomal RNA small subunit methyltransferase H (299 aa).

Residues 45–47 (GGH), D64, F92, D108, and Q115 contribute to the S-adenosyl-L-methionine site. Residues 275-299 (PQSDEQAKNPRSRSAKLRLAQRKEQ) are disordered. Basic residues predominate over residues 284-299 (PRSRSAKLRLAQRKEQ).

The protein belongs to the methyltransferase superfamily. RsmH family.

The protein resides in the cytoplasm. The enzyme catalyses cytidine(1402) in 16S rRNA + S-adenosyl-L-methionine = N(4)-methylcytidine(1402) in 16S rRNA + S-adenosyl-L-homocysteine + H(+). Functionally, specifically methylates the N4 position of cytidine in position 1402 (C1402) of 16S rRNA. The sequence is that of Ribosomal RNA small subunit methyltransferase H from Gloeothece citriformis (strain PCC 7424) (Cyanothece sp. (strain PCC 7424)).